Reading from the N-terminus, the 311-residue chain is Putative HTH-type transcriptional regulatory protein MTH_967 (311 aa).

The region spanning 134 to 192 (LREVREEYNLSLKDLADLAHVSRKTIYKYENGLARASAETAMILEEILNIRITLSIDIF) is the HTH cro/C1-type domain. A DNA-binding region (H-T-H motif) is located at residues 145-164 (LKDLADLAHVSRKTIYKYEN).

In Methanothermobacter thermautotrophicus (strain ATCC 29096 / DSM 1053 / JCM 10044 / NBRC 100330 / Delta H) (Methanobacterium thermoautotrophicum), this protein is Putative HTH-type transcriptional regulatory protein MTH_967.